The primary structure comprises 464 residues: Cysteine--tRNA ligase 1 (464 aa).

Cys28 is a Zn(2+) binding site. A 'HIGH' region motif is present at residues 30 to 40 (VTIYDLCHIGH). Residues Cys209, His234, and Glu238 each contribute to the Zn(2+) site. A 'KMSKS' region motif is present at residues 266–270 (KMSKS). Residue Lys269 participates in ATP binding.

Belongs to the class-I aminoacyl-tRNA synthetase family. In terms of assembly, monomer. Zn(2+) is required as a cofactor.

Its subcellular location is the cytoplasm. The enzyme catalyses tRNA(Cys) + L-cysteine + ATP = L-cysteinyl-tRNA(Cys) + AMP + diphosphate. The sequence is that of Cysteine--tRNA ligase 1 from Photobacterium profundum (strain SS9).